Reading from the N-terminus, the 745-residue chain is Junction plakoglobin (745 aa).

N-acetylmethionine is present on Met-1. Residue Thr-14 is glycosylated (O-linked (GlcNAc) threonine). 2 positions are modified to phosphoserine: Ser-99 and Ser-125. 12 ARM repeats span residues Asn-132–Lys-171, Lys-172–His-215, Arg-216–Leu-255, Glu-258–Tyr-297, Gly-298–Cys-341, Pro-342–Asp-381, Ala-383–Cys-420, Ser-423–Ser-464, Glu-470–Leu-510, Pro-512–Thr-551, Pro-574–Gln-613, and Lys-615–Arg-661. Positions Asn-132–Tyr-297 are interaction with DSC1 and DSG1. At Ser-182 the chain carries Phosphoserine. The segment at Pro-574–Arg-661 is interaction with DSC1. Phosphoserine is present on residues Ser-665 and Ser-730.

Belongs to the beta-catenin family. Homodimer. Component of an E-cadherin/catenin adhesion complex composed of at least E-cadherin/CDH1 and gamma-catenin/JUP, and possibly alpha-catenin/CTNNA1; the complex is located to adherens junctions. The stable association of CTNNA1 is controversial as CTNNA1 was shown not to bind to F-actin when assembled in the complex. Interacts with MUC1. Interacts with CAV1. Interacts with PTPRJ. Interacts with DSG1. Interacts with DSC1 and DSC2. Interacts with PKP2. Interacts with PKP3 (via N-terminus); the interaction is required for PKP3 localization to desmosome cell-cell junctions. Interacts with DSG4. In terms of processing, may be phosphorylated by FER. Expressed in the heart (at protein level).

The protein localises to the cell junction. The protein resides in the adherens junction. It is found in the desmosome. Its subcellular location is the cytoplasm. It localises to the cytoskeleton. The protein localises to the cell membrane. The protein resides in the nucleus. Its function is as follows. Common junctional plaque protein. The membrane-associated plaques are architectural elements in an important strategic position to influence the arrangement and function of both the cytoskeleton and the cells within the tissue. The presence of plakoglobin in both the desmosomes and in the intermediate junctions suggests that it plays a central role in the structure and function of submembranous plaques. Acts as a substrate for VE-PTP and is required by it to stimulate VE-cadherin function in endothelial cells. Can replace beta-catenin in E-cadherin/catenin adhesion complexes which are proposed to couple cadherins to the actin cytoskeleton. The chain is Junction plakoglobin from Rattus norvegicus (Rat).